We begin with the raw amino-acid sequence, 506 residues long: Tabersonine 6,7-epoxidase isoform 1 (506 aa).

A helical membrane pass occupies residues 1–21; it reads MEFVVSLFAFVVSCFILLKVA. Asn-173 and Asn-261 each carry an N-linked (GlcNAc...) asparagine glycan. Cys-441 lines the heme pocket.

The protein belongs to the cytochrome P450 family. Requires heme as cofactor. As to expression, mainly expressed in roots.

It localises to the endoplasmic reticulum membrane. It carries out the reaction (-)-tabersonine + reduced [NADPH--hemoprotein reductase] + O2 = lochnericine + oxidized [NADPH--hemoprotein reductase] + H2O + H(+). It functions in the pathway alkaloid biosynthesis. In terms of biological role, component of the monoterpenoid indole alkaloids (MIAs, e.g. echitovenine, tabersonine, lochnericine, 19-hydroxytabersonine and horhammericine) biosynthetic pathway; MIAs are used in cancer treatment and other medical applications. Cytochrome P450 catalyzing the conversion of tabersonine to lochnericine. The sequence is that of Tabersonine 6,7-epoxidase isoform 1 from Catharanthus roseus (Madagascar periwinkle).